Reading from the N-terminus, the 223-residue chain is Deoxyribose-phosphate aldolase (223 aa).

D89 serves as the catalytic Proton donor/acceptor. The Schiff-base intermediate with acetaldehyde role is filled by K152. The active-site Proton donor/acceptor is K181.

Belongs to the DeoC/FbaB aldolase family. DeoC type 1 subfamily.

The protein resides in the cytoplasm. The enzyme catalyses 2-deoxy-D-ribose 5-phosphate = D-glyceraldehyde 3-phosphate + acetaldehyde. It functions in the pathway carbohydrate degradation; 2-deoxy-D-ribose 1-phosphate degradation; D-glyceraldehyde 3-phosphate and acetaldehyde from 2-deoxy-alpha-D-ribose 1-phosphate: step 2/2. Catalyzes a reversible aldol reaction between acetaldehyde and D-glyceraldehyde 3-phosphate to generate 2-deoxy-D-ribose 5-phosphate. This is Deoxyribose-phosphate aldolase from Bacillus subtilis (strain 168).